Reading from the N-terminus, the 472-residue chain is Aspartyl/glutamyl-tRNA(Asn/Gln) amidotransferase subunit B (472 aa).

Belongs to the GatB/GatE family. GatB subfamily. As to quaternary structure, heterotrimer of A, B and C subunits.

It carries out the reaction L-glutamyl-tRNA(Gln) + L-glutamine + ATP + H2O = L-glutaminyl-tRNA(Gln) + L-glutamate + ADP + phosphate + H(+). It catalyses the reaction L-aspartyl-tRNA(Asn) + L-glutamine + ATP + H2O = L-asparaginyl-tRNA(Asn) + L-glutamate + ADP + phosphate + 2 H(+). In terms of biological role, allows the formation of correctly charged Asn-tRNA(Asn) or Gln-tRNA(Gln) through the transamidation of misacylated Asp-tRNA(Asn) or Glu-tRNA(Gln) in organisms which lack either or both of asparaginyl-tRNA or glutaminyl-tRNA synthetases. The reaction takes place in the presence of glutamine and ATP through an activated phospho-Asp-tRNA(Asn) or phospho-Glu-tRNA(Gln). The polypeptide is Aspartyl/glutamyl-tRNA(Asn/Gln) amidotransferase subunit B (Campylobacter jejuni subsp. doylei (strain ATCC BAA-1458 / RM4099 / 269.97)).